Here is a 177-residue protein sequence, read N- to C-terminus: Large ribosomal subunit protein uL6 (177 aa).

It belongs to the universal ribosomal protein uL6 family. As to quaternary structure, part of the 50S ribosomal subunit.

Its function is as follows. This protein binds to the 23S rRNA, and is important in its secondary structure. It is located near the subunit interface in the base of the L7/L12 stalk, and near the tRNA binding site of the peptidyltransferase center. The polypeptide is Large ribosomal subunit protein uL6 (Vibrio vulnificus (strain CMCP6)).